The chain runs to 391 residues: uncharacterized protein (391 aa).

Belongs to the mycobacterial PPE family.

This is an uncharacterized protein from Mycobacterium tuberculosis (strain CDC 1551 / Oshkosh).